The primary structure comprises 159 residues: Protein-export protein SecB (159 aa).

This sequence belongs to the SecB family. In terms of assembly, homotetramer, a dimer of dimers. One homotetramer interacts with 1 SecA dimer.

The protein localises to the cytoplasm. One of the proteins required for the normal export of preproteins out of the cell cytoplasm. It is a molecular chaperone that binds to a subset of precursor proteins, maintaining them in a translocation-competent state. It also specifically binds to its receptor SecA. The chain is Protein-export protein SecB from Nitrosospira multiformis (strain ATCC 25196 / NCIMB 11849 / C 71).